Here is a 208-residue protein sequence, read N- to C-terminus: Uracil phosphoribosyltransferase (208 aa).

5-phospho-alpha-D-ribose 1-diphosphate contacts are provided by residues R78, R103, and 130 to 138 (DPMLATGGS). Uracil contacts are provided by residues I193 and 198 to 200 (GDA). A 5-phospho-alpha-D-ribose 1-diphosphate-binding site is contributed by D199.

The protein belongs to the UPRTase family. The cofactor is Mg(2+).

It carries out the reaction UMP + diphosphate = 5-phospho-alpha-D-ribose 1-diphosphate + uracil. It participates in pyrimidine metabolism; UMP biosynthesis via salvage pathway; UMP from uracil: step 1/1. Its activity is regulated as follows. Allosterically activated by GTP. Its function is as follows. Catalyzes the conversion of uracil and 5-phospho-alpha-D-ribose 1-diphosphate (PRPP) to UMP and diphosphate. In Tolumonas auensis (strain DSM 9187 / NBRC 110442 / TA 4), this protein is Uracil phosphoribosyltransferase.